The primary structure comprises 93 residues: Small ribosomal subunit protein uS19 (93 aa).

This sequence belongs to the universal ribosomal protein uS19 family.

Its function is as follows. Protein S19 forms a complex with S13 that binds strongly to the 16S ribosomal RNA. The chain is Small ribosomal subunit protein uS19 from Lawsonia intracellularis (strain PHE/MN1-00).